The sequence spans 73 residues: Translation initiation factor IF-1 (73 aa).

The region spanning 1-73 (MAKKDGVIEI…NRGRIVYRYR (73 aa)) is the S1-like domain.

The protein belongs to the IF-1 family. Component of the 30S ribosomal translation pre-initiation complex which assembles on the 30S ribosome in the order IF-2 and IF-3, IF-1 and N-formylmethionyl-tRNA(fMet); mRNA recruitment can occur at any time during PIC assembly.

The protein localises to the cytoplasm. Functionally, one of the essential components for the initiation of protein synthesis. Stabilizes the binding of IF-2 and IF-3 on the 30S subunit to which N-formylmethionyl-tRNA(fMet) subsequently binds. Helps modulate mRNA selection, yielding the 30S pre-initiation complex (PIC). Upon addition of the 50S ribosomal subunit IF-1, IF-2 and IF-3 are released leaving the mature 70S translation initiation complex. This Acidothermus cellulolyticus (strain ATCC 43068 / DSM 8971 / 11B) protein is Translation initiation factor IF-1.